The sequence spans 68 residues: Probable tautomerase jhp_0858 (68 aa).

Pro-2 serves as the catalytic Proton acceptor; via imino nitrogen.

The protein belongs to the 4-oxalocrotonate tautomerase family.

The protein is Probable tautomerase jhp_0858 of Helicobacter pylori (strain J99 / ATCC 700824) (Campylobacter pylori J99).